Reading from the N-terminus, the 491-residue chain is 3-octaprenyl-4-hydroxybenzoate carboxy-lyase (491 aa).

Asn172 lines the Mn(2+) pocket. Prenylated FMN contacts are provided by residues 175–177 (IYR), 189–191 (RWL), and 194–195 (RG). Residue Glu238 participates in Mn(2+) binding. Residue Asp287 is the Proton donor of the active site.

The protein belongs to the UbiD family. As to quaternary structure, homohexamer. Prenylated FMN is required as a cofactor. Requires Mn(2+) as cofactor.

The protein resides in the cell membrane. The enzyme catalyses a 4-hydroxy-3-(all-trans-polyprenyl)benzoate + H(+) = a 2-(all-trans-polyprenyl)phenol + CO2. The protein operates within cofactor biosynthesis; ubiquinone biosynthesis. Functionally, catalyzes the decarboxylation of 3-octaprenyl-4-hydroxy benzoate to 2-octaprenylphenol, an intermediate step in ubiquinone biosynthesis. In Histophilus somni (strain 129Pt) (Haemophilus somnus), this protein is 3-octaprenyl-4-hydroxybenzoate carboxy-lyase.